Here is a 157-residue protein sequence, read N- to C-terminus: Endoribonuclease YbeY (157 aa).

Residues H111, H115, and H121 each coordinate Zn(2+).

Belongs to the endoribonuclease YbeY family. It depends on Zn(2+) as a cofactor.

It localises to the cytoplasm. Single strand-specific metallo-endoribonuclease involved in late-stage 70S ribosome quality control and in maturation of the 3' terminus of the 16S rRNA. This chain is Endoribonuclease YbeY, found in Pseudomonas entomophila (strain L48).